A 443-amino-acid chain; its full sequence is Sulfoquinovose isomerase (443 aa).

It belongs to the SqvD family.

The catalysed reaction is 6-sulfo-beta-D-quinovose = 6-deoxy-6-sulfo-D-fructose. In terms of biological role, part of the sulfo-EMP2 pathway, a D-sulfoquinovose degradation pathway that produces sulfolactate (SL). Catalyzes the isomerization of sulfoquinovose (SQ) to 6-deoxy-6-sulfo-D-fructose (SF). This chain is Sulfoquinovose isomerase, found in Alkalicoccus urumqiensis (Bacillus urumqiensis).